The chain runs to 39 residues: Cytochrome b6-f complex subunit 5 (39 aa).

Residues 5 to 25 (LLCGIVLGLVPITLLGLFVSA) form a helical membrane-spanning segment.

Belongs to the PetG family. The 4 large subunits of the cytochrome b6-f complex are cytochrome b6, subunit IV (17 kDa polypeptide, PetD), cytochrome f and the Rieske protein, while the 4 small subunits are PetG, PetL, PetM and PetN. The complex functions as a dimer.

Its subcellular location is the cellular thylakoid membrane. Functionally, component of the cytochrome b6-f complex, which mediates electron transfer between photosystem II (PSII) and photosystem I (PSI), cyclic electron flow around PSI, and state transitions. PetG is required for either the stability or assembly of the cytochrome b6-f complex. This Prochlorococcus marinus (strain MIT 9301) protein is Cytochrome b6-f complex subunit 5.